The chain runs to 120 residues: Large ribosomal subunit protein uL18 (120 aa).

Belongs to the universal ribosomal protein uL18 family. As to quaternary structure, part of the 50S ribosomal subunit; part of the 5S rRNA/L5/L18/L25 subcomplex. Contacts the 5S and 23S rRNAs.

Its function is as follows. This is one of the proteins that bind and probably mediate the attachment of the 5S RNA into the large ribosomal subunit, where it forms part of the central protuberance. This chain is Large ribosomal subunit protein uL18, found in Staphylococcus haemolyticus (strain JCSC1435).